Consider the following 23-residue polypeptide: ARCEQCPSYCCQSDSPPECDGCE.

3 cysteine pairs are disulfide-bonded: C3/C11, C6/C19, and C10/C22.

As to expression, expressed by the venom duct.

It is found in the secreted. Functionally, causes abnormal twist followed by immobility when injected into C.elegans. This is Augerpeptide hhe7a from Hastula hectica (Sea snail).